Consider the following 245-residue polypeptide: 1-(5-phosphoribosyl)-5-[(5-phosphoribosylamino)methylideneamino] imidazole-4-carboxamide isomerase (245 aa).

Residue D7 is the Proton acceptor of the active site. Catalysis depends on D129, which acts as the Proton donor.

It belongs to the HisA/HisF family.

The protein resides in the cytoplasm. The enzyme catalyses 1-(5-phospho-beta-D-ribosyl)-5-[(5-phospho-beta-D-ribosylamino)methylideneamino]imidazole-4-carboxamide = 5-[(5-phospho-1-deoxy-D-ribulos-1-ylimino)methylamino]-1-(5-phospho-beta-D-ribosyl)imidazole-4-carboxamide. The protein operates within amino-acid biosynthesis; L-histidine biosynthesis; L-histidine from 5-phospho-alpha-D-ribose 1-diphosphate: step 4/9. This Shewanella sp. (strain ANA-3) protein is 1-(5-phosphoribosyl)-5-[(5-phosphoribosylamino)methylideneamino] imidazole-4-carboxamide isomerase.